Here is a 710-residue protein sequence, read N- to C-terminus: Polyribonucleotide nucleotidyltransferase (710 aa).

Mg(2+) contacts are provided by aspartate 486 and aspartate 492. The KH domain occupies 553–612; sequence PRIHTIKISVDKIKDVIGKGGSVIRALTEETGTTIEIEDDGTVKIAATDGDKAKFAIRRI. The S1 motif domain occupies 622-690; it reads GRIYNGKVTR…RQGRVRLSIK (69 aa). Positions 690-710 are disordered; the sequence is KEAGEQAQPEAEAVPAAPEAE. Low complexity predominate over residues 694–710; sequence EQAQPEAEAVPAAPEAE.

This sequence belongs to the polyribonucleotide nucleotidyltransferase family. As to quaternary structure, component of the RNA degradosome, which is a multiprotein complex involved in RNA processing and mRNA degradation. Requires Mg(2+) as cofactor.

The protein localises to the cytoplasm. The catalysed reaction is RNA(n+1) + phosphate = RNA(n) + a ribonucleoside 5'-diphosphate. Functionally, involved in mRNA degradation. Catalyzes the phosphorolysis of single-stranded polyribonucleotides processively in the 3'- to 5'-direction. In Erwinia tasmaniensis (strain DSM 17950 / CFBP 7177 / CIP 109463 / NCPPB 4357 / Et1/99), this protein is Polyribonucleotide nucleotidyltransferase.